A 548-amino-acid chain; its full sequence is Chaperonin GroEL (548 aa).

ATP is bound by residues 29–32, 86–90, Gly413, 476–478, and Asp492; these read TLGP, DGTTT, and NAL. The span at 522–531 shows a compositional bias: acidic residues; sequence PDEDDNDDGD. A disordered region spans residues 522–548; sequence PDEDDNDDGDMGGGAPGMGGMGGMPGM. Over residues 532 to 548 the composition is skewed to gly residues; sequence MGGGAPGMGGMGGMPGM.

This sequence belongs to the chaperonin (HSP60) family. In terms of assembly, forms a cylinder of 14 subunits composed of two heptameric rings stacked back-to-back. Interacts with the co-chaperonin GroES.

It localises to the cytoplasm. It catalyses the reaction ATP + H2O + a folded polypeptide = ADP + phosphate + an unfolded polypeptide.. Functionally, together with its co-chaperonin GroES, plays an essential role in assisting protein folding. The GroEL-GroES system forms a nano-cage that allows encapsulation of the non-native substrate proteins and provides a physical environment optimized to promote and accelerate protein folding. In Natranaerobius thermophilus (strain ATCC BAA-1301 / DSM 18059 / JW/NM-WN-LF), this protein is Chaperonin GroEL.